Consider the following 254-residue polypeptide: Ubiquinone/menaquinone biosynthesis C-methyltransferase UbiE (254 aa).

Residues Thr77, Asp98, 126-127, and Ser143 contribute to the S-adenosyl-L-methionine site; that span reads DA.

This sequence belongs to the class I-like SAM-binding methyltransferase superfamily. MenG/UbiE family.

The enzyme catalyses a 2-demethylmenaquinol + S-adenosyl-L-methionine = a menaquinol + S-adenosyl-L-homocysteine + H(+). It catalyses the reaction a 2-methoxy-6-(all-trans-polyprenyl)benzene-1,4-diol + S-adenosyl-L-methionine = a 5-methoxy-2-methyl-3-(all-trans-polyprenyl)benzene-1,4-diol + S-adenosyl-L-homocysteine + H(+). It participates in quinol/quinone metabolism; menaquinone biosynthesis; menaquinol from 1,4-dihydroxy-2-naphthoate: step 2/2. It functions in the pathway cofactor biosynthesis; ubiquinone biosynthesis. Its function is as follows. Methyltransferase required for the conversion of demethylmenaquinol (DMKH2) to menaquinol (MKH2) and the conversion of 2-polyprenyl-6-methoxy-1,4-benzoquinol (DDMQH2) to 2-polyprenyl-3-methyl-6-methoxy-1,4-benzoquinol (DMQH2). In Blochmanniella pennsylvanica (strain BPEN), this protein is Ubiquinone/menaquinone biosynthesis C-methyltransferase UbiE.